A 384-amino-acid polypeptide reads, in one-letter code: Glycerol 3-phosphate oxidase (384 aa).

Positions 1–15 are cleaved as a signal peptide; that stretch reads METRDVLIVGGGVIG. Position 14 (isoleucine 14) interacts with FAD. Cysteine 16 carries the N-palmitoyl cysteine lipid modification. Cysteine 16 carries the S-diacylglycerol cysteine lipid modification. FAD is bound by residues glutamate 33, 42 to 43, and 47 to 49; these read TS and SGV. Serine 47 and histidine 51 together coordinate sn-glycerol 3-phosphate. The Proton acceptor role is filled by histidine 51. Valine 177 lines the FAD pocket. Residues lysine 258 and arginine 320 each contribute to the sn-glycerol 3-phosphate site. 346 to 347 contacts FAD; the sequence is MK. Serine 348 contacts sn-glycerol 3-phosphate. FAD is bound at residue threonine 352.

Monomer. FAD is required as a cofactor.

The protein resides in the cytoplasm. Its subcellular location is the cell membrane. It catalyses the reaction sn-glycerol 3-phosphate + O2 = dihydroxyacetone phosphate + H2O2. It participates in polyol metabolism; glycerol degradation via glycerol kinase pathway; glycerone phosphate from sn-glycerol 3-phosphate (aerobic route): step 1/1. Catalyzes the oxidation of glycerol 3-phosphate to dihydroxyacetone phosphate (DHAP), with a reduction of O2 to H2O2. The formation of hydrogen peroxide by this enzyme is crucial for cytotoxic effects of M.pneumoniae on host cells. Is involved in the metabolism of glycerol and is essential for glycerol utilization; glycerol is one of the few carbon sources that can be utilized by M.pneumoniae for growth. To a lesser extent, is also able to use glyceraldehyde 3-phosphate (GAP), an intermediate in the glycolysis pathway, as a substrate (but the structure of the product has not been elucidated). Therefore, in the absence of glycerol, GAP may serve as a substrate in the GlpO reaction to supply H2O2 during mycoplasma infection. Does not show any dehydrogenase activity with NAD(+). In Mycoplasma pneumoniae (strain ATCC 29342 / M129 / Subtype 1) (Mycoplasmoides pneumoniae), this protein is Glycerol 3-phosphate oxidase.